Here is a 202-residue protein sequence, read N- to C-terminus: Probable molybdenum cofactor guanylyltransferase (202 aa).

GTP contacts are provided by residues 13–15, K25, D71, and D103; that span reads LAG. D103 serves as a coordination point for Mg(2+).

Belongs to the MobA family. Mg(2+) is required as a cofactor.

It is found in the cytoplasm. The enzyme catalyses Mo-molybdopterin + GTP + H(+) = Mo-molybdopterin guanine dinucleotide + diphosphate. Functionally, transfers a GMP moiety from GTP to Mo-molybdopterin (Mo-MPT) cofactor (Moco or molybdenum cofactor) to form Mo-molybdopterin guanine dinucleotide (Mo-MGD) cofactor. This is Probable molybdenum cofactor guanylyltransferase from Opitutus terrae (strain DSM 11246 / JCM 15787 / PB90-1).